We begin with the raw amino-acid sequence, 179 residues long: MKQEVEKWRPFGHPDGDIRDLSFLDAHQAVYVQHHEGKEPLEYRFWVTYSLHCFTKDYEHQTNEEKQSLMYHAPKESRPFCQHRYNLARTHLKRTILALPESNVIHAGYGSYAVIEVDLDGGDKAFYFVAFRAFREKKKLRLHVTSAYPISEKQKGKSVKFFTIAYNLLRNKQLPQPSK.

The protein is Protein YjaZ of Escherichia coli (strain K12).